Consider the following 363-residue polypeptide: UDP-N-acetylglucosamine--N-acetylmuramyl-(pentapeptide) pyrophosphoryl-undecaprenol N-acetylglucosamine transferase (363 aa).

Residues 10-12 (TGG), N124, S195, I250, and Q295 contribute to the UDP-N-acetyl-alpha-D-glucosamine site.

This sequence belongs to the glycosyltransferase 28 family. MurG subfamily.

It localises to the cell membrane. It catalyses the reaction di-trans,octa-cis-undecaprenyl diphospho-N-acetyl-alpha-D-muramoyl-L-alanyl-D-glutamyl-meso-2,6-diaminopimeloyl-D-alanyl-D-alanine + UDP-N-acetyl-alpha-D-glucosamine = di-trans,octa-cis-undecaprenyl diphospho-[N-acetyl-alpha-D-glucosaminyl-(1-&gt;4)]-N-acetyl-alpha-D-muramoyl-L-alanyl-D-glutamyl-meso-2,6-diaminopimeloyl-D-alanyl-D-alanine + UDP + H(+). It participates in cell wall biogenesis; peptidoglycan biosynthesis. Functionally, cell wall formation. Catalyzes the transfer of a GlcNAc subunit on undecaprenyl-pyrophosphoryl-MurNAc-pentapeptide (lipid intermediate I) to form undecaprenyl-pyrophosphoryl-MurNAc-(pentapeptide)GlcNAc (lipid intermediate II). This is UDP-N-acetylglucosamine--N-acetylmuramyl-(pentapeptide) pyrophosphoryl-undecaprenol N-acetylglucosamine transferase from Listeria welshimeri serovar 6b (strain ATCC 35897 / DSM 20650 / CCUG 15529 / CIP 8149 / NCTC 11857 / SLCC 5334 / V8).